The sequence spans 205 residues: GTP cyclohydrolase-2 (205 aa).

49-53 (RIHSE) serves as a coordination point for GTP. 3 residues coordinate Zn(2+): C54, C65, and C67. Residues Q70, 92–94 (EGR), and T114 contribute to the GTP site. The active-site Proton acceptor is the D126. Catalysis depends on R128, which acts as the Nucleophile. T149 and K154 together coordinate GTP.

It belongs to the GTP cyclohydrolase II family. Requires Zn(2+) as cofactor.

The enzyme catalyses GTP + 4 H2O = 2,5-diamino-6-hydroxy-4-(5-phosphoribosylamino)-pyrimidine + formate + 2 phosphate + 3 H(+). Its pathway is cofactor biosynthesis; riboflavin biosynthesis; 5-amino-6-(D-ribitylamino)uracil from GTP: step 1/4. In terms of biological role, catalyzes the conversion of GTP to 2,5-diamino-6-ribosylamino-4(3H)-pyrimidinone 5'-phosphate (DARP), formate and pyrophosphate. This is GTP cyclohydrolase-2 from Shewanella loihica (strain ATCC BAA-1088 / PV-4).